The sequence spans 893 residues: Translation initiation factor IF-2 (893 aa).

The tract at residues 1–266 (MVDTKNPGDK…AKPAPSKQRG (266 aa)) is disordered. Low complexity predominate over residues 59–70 (PADAPTAAAAAP). A compositionally biased stretch (pro residues) spans 71–92 (APAPAPVPSAAPRPAAPPPPSR). The segment covering 93–104 (PQQSRSQSPSRS) has biased composition (low complexity). Basic and acidic residues-rich tracts occupy residues 128–148 (ARVR…RRNS) and 155–196 (AERE…EAKR). Low complexity predominate over residues 197–226 (PAAAATPAKSATPAARPTGAPAVRAPGVAA). One can recognise a tr-type G domain in the interval 389–560 (PRSPVVTVMG…ALQAELLDLK (172 aa)). The tract at residues 398 to 405 (GHVDHGKT) is G1. GTP is bound at residue 398-405 (GHVDHGKT). Positions 423-427 (GITQH) are G2. A G3 region spans residues 446–449 (DTPG). Residues 446–450 (DTPGH) and 500–503 (NKID) contribute to the GTP site. Residues 500–503 (NKID) are G4. Residues 536 to 538 (SAK) form a G5 region.

This sequence belongs to the TRAFAC class translation factor GTPase superfamily. Classic translation factor GTPase family. IF-2 subfamily.

It localises to the cytoplasm. Functionally, one of the essential components for the initiation of protein synthesis. Protects formylmethionyl-tRNA from spontaneous hydrolysis and promotes its binding to the 30S ribosomal subunits. Also involved in the hydrolysis of GTP during the formation of the 70S ribosomal complex. This Rhodopseudomonas palustris (strain BisA53) protein is Translation initiation factor IF-2.